The following is a 914-amino-acid chain: Coatomer subunit beta' (914 aa).

7 WD repeats span residues 13–54 (SRSD…KDFE), 55–94 (VCDV…KVHS), 97–136 (AHSD…ACQR), 140–180 (GHTH…ANFT), 183–224 (GHEK…CVQT), 227–266 (GHAQ…LETC), and 352–390 (ACEI…NKAF).

Belongs to the WD repeat COPB2 family. Oligomeric complex that consists of at least the alpha, beta, beta', gamma, delta, epsilon and zeta subunits.

The protein resides in the cytoplasm. It is found in the golgi apparatus membrane. The protein localises to the cytoplasmic vesicle. It localises to the COPI-coated vesicle membrane. Its function is as follows. The coatomer is a cytosolic protein complex that binds to dilysine motifs and reversibly associates with Golgi non-clathrin-coated vesicles, which further mediate biosynthetic protein transport from the ER, via the Golgi up to the trans Golgi network. Coatomer complex is required for budding from Golgi membranes, and is essential for the retrograde Golgi-to-ER transport of dilysine-tagged proteins. The protein is Coatomer subunit beta' of Drosophila melanogaster (Fruit fly).